Here is a 270-residue protein sequence, read N- to C-terminus: PspA protein (270 aa).

The segment at 238 to 270 (MRGEALPAGGTTATPRPATETSGGAIAEQPYGQ) is disordered. Over residues 240 to 258 (GEALPAGGTTATPRPATET) the composition is skewed to low complexity.

It belongs to the PspA/Vipp/IM30 family.

It localises to the cytoplasm. Involved in resistance to stress. Associates with and regulates lipid droplets (LDs) homeostasis under conditions of stress and may regulate non-replicating persistence (NRP). Could be involved in preservation of envelope integrity and tolerance to surface stress. The sequence is that of PspA protein from Mycobacterium tuberculosis (strain ATCC 25177 / H37Ra).